The chain runs to 157 residues: NADPH-dependent 7-cyano-7-deazaguanine reductase (157 aa).

The active-site Thioimide intermediate is cysteine 55. Catalysis depends on aspartate 62, which acts as the Proton donor. Residues 77–79 (VES) and 96–97 (HE) each bind substrate.

This sequence belongs to the GTP cyclohydrolase I family. QueF type 1 subfamily.

Its subcellular location is the cytoplasm. The enzyme catalyses 7-aminomethyl-7-carbaguanine + 2 NADP(+) = 7-cyano-7-deazaguanine + 2 NADPH + 3 H(+). Its pathway is tRNA modification; tRNA-queuosine biosynthesis. In terms of biological role, catalyzes the NADPH-dependent reduction of 7-cyano-7-deazaguanine (preQ0) to 7-aminomethyl-7-deazaguanine (preQ1). This Neisseria meningitidis serogroup A / serotype 4A (strain DSM 15465 / Z2491) protein is NADPH-dependent 7-cyano-7-deazaguanine reductase.